A 386-amino-acid polypeptide reads, in one-letter code: Glucose-1-phosphate adenylyltransferase (386 aa).

Alpha-D-glucose 1-phosphate is bound by residues Tyr100, Gly165, 180–181, and Ser191; that span reads EK.

It belongs to the bacterial/plant glucose-1-phosphate adenylyltransferase family. As to quaternary structure, homotetramer.

It carries out the reaction alpha-D-glucose 1-phosphate + ATP + H(+) = ADP-alpha-D-glucose + diphosphate. Its pathway is glycan biosynthesis; glycogen biosynthesis. Functionally, involved in the biosynthesis of ADP-glucose, a building block required for the elongation reactions to produce glycogen. Catalyzes the reaction between ATP and alpha-D-glucose 1-phosphate (G1P) to produce pyrophosphate and ADP-Glc. The protein is Glucose-1-phosphate adenylyltransferase of Clostridium beijerinckii (strain ATCC 51743 / NCIMB 8052) (Clostridium acetobutylicum).